We begin with the raw amino-acid sequence, 162 residues long: D-beta-D-heptose 1-phosphate adenylyltransferase (162 aa).

The catalysed reaction is D-glycero-beta-D-manno-heptose 1-phosphate + ATP + H(+) = ADP-D-glycero-beta-D-manno-heptose + diphosphate. Its pathway is nucleotide-sugar biosynthesis; ADP-L-glycero-beta-D-manno-heptose biosynthesis; ADP-L-glycero-beta-D-manno-heptose from D-glycero-beta-D-manno-heptose 7-phosphate: step 3/4. It participates in bacterial outer membrane biogenesis; LPS core biosynthesis. Catalyzes the ADP transfer from ATP to D-glycero-beta-D-manno-heptose 1-phosphate, yielding ADP-D-glycero-beta-D-manno-heptose. Cannot use GTP, UTP, or CTP as substrate. Is not active against the alpha-anomer substrate. Is also able to catalyze the ADP transfer to beta-glucose 1-phosphate in vitro, yielding ADP-beta-glucose. The chain is D-beta-D-heptose 1-phosphate adenylyltransferase from Bordetella bronchiseptica (strain ATCC BAA-588 / NCTC 13252 / RB50) (Alcaligenes bronchisepticus).